Consider the following 816-residue polypeptide: Leucine--tRNA ligase (816 aa).

The short motif at 42–52 (PYPSGSLHMGH) is the 'HIGH' region element. A 'KMSKS' region motif is present at residues 574 to 578 (KMSKS). An ATP-binding site is contributed by K577.

Belongs to the class-I aminoacyl-tRNA synthetase family.

The protein localises to the cytoplasm. It catalyses the reaction tRNA(Leu) + L-leucine + ATP = L-leucyl-tRNA(Leu) + AMP + diphosphate. This chain is Leucine--tRNA ligase, found in Ruthia magnifica subsp. Calyptogena magnifica.